A 102-amino-acid polypeptide reads, in one-letter code: Urease subunit beta (102 aa).

Belongs to the urease beta subunit family. Heterotrimer of UreA (gamma), UreB (beta) and UreC (alpha) subunits. Three heterotrimers associate to form the active enzyme.

The protein localises to the cytoplasm. It carries out the reaction urea + 2 H2O + H(+) = hydrogencarbonate + 2 NH4(+). It participates in nitrogen metabolism; urea degradation; CO(2) and NH(3) from urea (urease route): step 1/1. The chain is Urease subunit beta from Trichodesmium erythraeum (strain IMS101).